A 360-amino-acid chain; its full sequence is Photosystem II protein D1 (360 aa).

3 consecutive transmembrane segments (helical) span residues 30–47 (YVGWFGVLMIPCLLAAAA), 119–134 (HFLIGISAYMGRQWEL), and 143–157 (WICVAYSAPVSAAFA). H119 is a chlorophyll a binding site. Y127 is a pheophytin a binding site. [CaMn4O5] cluster-binding residues include D171 and E190. Residues 198 to 219 (FHMAGVAGMFGGSLFSAMHGSL) form a helical membrane-spanning segment. H199 contacts chlorophyll a. A quinone contacts are provided by residues H216 and 265–266 (SF). H216 contacts Fe cation. Position 273 (H273) interacts with Fe cation. The chain crosses the membrane as a helical span at residues 275 to 289 (FLAVFPVVCVWLTSM). Residues H333, E334, D343, and A345 each contribute to the [CaMn4O5] cluster site. Residues 346–360 (AAESTTVALTAPAIG) constitute a propeptide that is removed on maturation.

It belongs to the reaction center PufL/M/PsbA/D family. As to quaternary structure, PSII is composed of 1 copy each of membrane proteins PsbA, PsbB, PsbC, PsbD, PsbE, PsbF, PsbH, PsbI, PsbJ, PsbK, PsbL, PsbM, PsbT, PsbX, PsbY, Psb30/Ycf12, peripheral proteins PsbO, CyanoQ (PsbQ), PsbU, PsbV and a large number of cofactors. It forms dimeric complexes. The D1/D2 heterodimer binds P680, chlorophylls that are the primary electron donor of PSII, and subsequent electron acceptors. It shares a non-heme iron and each subunit binds pheophytin, quinone, additional chlorophylls, carotenoids and lipids. D1 provides most of the ligands for the Mn4-Ca-O5 cluster of the oxygen-evolving complex (OEC). There is also a Cl(-1) ion associated with D1 and D2, which is required for oxygen evolution. The PSII complex binds additional chlorophylls, carotenoids and specific lipids. is required as a cofactor. Post-translationally, tyr-162 forms a radical intermediate that is referred to as redox-active TyrZ, YZ or Y-Z. C-terminally processed by CtpA; processing is essential to allow assembly of the oxygen-evolving complex and thus photosynthetic growth.

The protein resides in the cellular thylakoid membrane. It catalyses the reaction 2 a plastoquinone + 4 hnu + 2 H2O = 2 a plastoquinol + O2. In terms of biological role, photosystem II (PSII) is a light-driven water:plastoquinone oxidoreductase that uses light energy to abstract electrons from H(2)O, generating O(2) and a proton gradient subsequently used for ATP formation. It consists of a core antenna complex that captures photons, and an electron transfer chain that converts photonic excitation into a charge separation. The D1/D2 (PsbA/PsbD) reaction center heterodimer binds P680, the primary electron donor of PSII as well as several subsequent electron acceptors. This Prochlorococcus marinus (strain MIT 9515) protein is Photosystem II protein D1.